Here is a 360-residue protein sequence, read N- to C-terminus: Phospho-N-acetylmuramoyl-pentapeptide-transferase (360 aa).

The next 10 membrane-spanning stretches (helical) occupy residues 24–44 (RAVM…PWTI), 69–89 (GTPT…TLLW), 92–112 (WANP…ALGF), 133–153 (MVWQ…LAAN), 158–178 (ILIV…GFLV), 199–219 (GLAT…AYAS), 239–259 (VVIF…FNAY), 263–283 (VFMG…VAVI), 288–308 (FVLV…MLQV), and 337–357 (QVVV…LSTL).

This sequence belongs to the glycosyltransferase 4 family. MraY subfamily. The cofactor is Mg(2+).

The protein resides in the cell inner membrane. It carries out the reaction UDP-N-acetyl-alpha-D-muramoyl-L-alanyl-gamma-D-glutamyl-meso-2,6-diaminopimeloyl-D-alanyl-D-alanine + di-trans,octa-cis-undecaprenyl phosphate = di-trans,octa-cis-undecaprenyl diphospho-N-acetyl-alpha-D-muramoyl-L-alanyl-D-glutamyl-meso-2,6-diaminopimeloyl-D-alanyl-D-alanine + UMP. It functions in the pathway cell wall biogenesis; peptidoglycan biosynthesis. In terms of biological role, catalyzes the initial step of the lipid cycle reactions in the biosynthesis of the cell wall peptidoglycan: transfers peptidoglycan precursor phospho-MurNAc-pentapeptide from UDP-MurNAc-pentapeptide onto the lipid carrier undecaprenyl phosphate, yielding undecaprenyl-pyrophosphoryl-MurNAc-pentapeptide, known as lipid I. This Neisseria meningitidis serogroup A / serotype 4A (strain DSM 15465 / Z2491) protein is Phospho-N-acetylmuramoyl-pentapeptide-transferase.